Consider the following 416-residue polypeptide: Serine hydroxymethyltransferase (416 aa).

(6S)-5,6,7,8-tetrahydrofolate-binding positions include Leu118 and Gly122–Leu124. Lys226 is modified (N6-(pyridoxal phosphate)lysine). (6S)-5,6,7,8-tetrahydrofolate contacts are provided by residues Glu242 and Ser350–Phe352.

It belongs to the SHMT family. In terms of assembly, homodimer. Requires pyridoxal 5'-phosphate as cofactor.

It localises to the cytoplasm. It catalyses the reaction (6R)-5,10-methylene-5,6,7,8-tetrahydrofolate + glycine + H2O = (6S)-5,6,7,8-tetrahydrofolate + L-serine. It functions in the pathway one-carbon metabolism; tetrahydrofolate interconversion. It participates in amino-acid biosynthesis; glycine biosynthesis; glycine from L-serine: step 1/1. Catalyzes the reversible interconversion of serine and glycine with tetrahydrofolate (THF) serving as the one-carbon carrier. This reaction serves as the major source of one-carbon groups required for the biosynthesis of purines, thymidylate, methionine, and other important biomolecules. Also exhibits THF-independent aldolase activity toward beta-hydroxyamino acids, producing glycine and aldehydes, via a retro-aldol mechanism. This is Serine hydroxymethyltransferase from Wolinella succinogenes (strain ATCC 29543 / DSM 1740 / CCUG 13145 / JCM 31913 / LMG 7466 / NCTC 11488 / FDC 602W) (Vibrio succinogenes).